The chain runs to 313 residues: MSENFQHKTVLLDEAVAGLNLRSDGIYIDGTFGRGGHSRLILSQLGAEGRLIAIDRDPQAIAAAAQIDDPRFSIIHGPFSALADYVQEMGLSSRIDGILLDLGVSSPQLDDPERGFSFMRDGPLDMRMDPSRGLSAAQWLMQAEEDDIAWVLKTFGEERFAKRIARAIVERNRTEPLSRTRELAALISDASPFKEKHKHPATRSFQAIRIYINSELDEIERALEGALVALAPQGRLSVISFHSLEDRLVKRFIRQYSRGPQVPKGLPLTEAQLQAQGGPQLKALGKRMPGEREVVDNPRARSSVLRVAERIAR.

Residues 35–37 (GGH), aspartate 55, phenylalanine 79, aspartate 101, and glutamine 108 each bind S-adenosyl-L-methionine.

It belongs to the methyltransferase superfamily. RsmH family.

The protein resides in the cytoplasm. The enzyme catalyses cytidine(1402) in 16S rRNA + S-adenosyl-L-methionine = N(4)-methylcytidine(1402) in 16S rRNA + S-adenosyl-L-homocysteine + H(+). Its function is as follows. Specifically methylates the N4 position of cytidine in position 1402 (C1402) of 16S rRNA. The polypeptide is Ribosomal RNA small subunit methyltransferase H (Edwardsiella ictaluri (strain 93-146)).